The chain runs to 146 residues: Large ribosomal subunit protein uL15 (146 aa).

The span at 1-13 shows a compositional bias: basic and acidic residues; the sequence is MKLNELHPSEGSR. The interval 1-56 is disordered; that stretch reads MKLNELHPSEGSRHARKRVGRGTSSGFGKTSGRGQKGQHARSGGNTRLGFEGGQMP. A compositionally biased stretch (gly residues) spans 23-35; the sequence is TSSGFGKTSGRGQ.

It belongs to the universal ribosomal protein uL15 family. As to quaternary structure, part of the 50S ribosomal subunit.

Its function is as follows. Binds to the 23S rRNA. This chain is Large ribosomal subunit protein uL15, found in Lactobacillus delbrueckii subsp. bulgaricus (strain ATCC 11842 / DSM 20081 / BCRC 10696 / JCM 1002 / NBRC 13953 / NCIMB 11778 / NCTC 12712 / WDCM 00102 / Lb 14).